Consider the following 178-residue polypeptide: Inner membrane-spanning protein YciB (178 aa).

5 consecutive transmembrane segments (helical) span residues leucine 12–valine 32, proline 50–histidine 70, phenylalanine 74–aspartate 94, leucine 120–phenylalanine 140, and alanine 145–alanine 165.

Belongs to the YciB family.

It is found in the cell inner membrane. In terms of biological role, plays a role in cell envelope biogenesis, maintenance of cell envelope integrity and membrane homeostasis. This chain is Inner membrane-spanning protein YciB, found in Laribacter hongkongensis (strain HLHK9).